Consider the following 201-residue polypeptide: Pyridoxal 5'-phosphate synthase subunit PdxT (201 aa).

Position 49 to 51 (49 to 51 (GES)) interacts with L-glutamine. Cysteine 81 serves as the catalytic Nucleophile. L-glutamine contacts are provided by residues arginine 110 and 139–140 (IR). Catalysis depends on charge relay system residues histidine 175 and glutamate 177.

This sequence belongs to the glutaminase PdxT/SNO family. As to quaternary structure, in the presence of PdxS, forms a dodecamer of heterodimers. Only shows activity in the heterodimer.

It catalyses the reaction aldehydo-D-ribose 5-phosphate + D-glyceraldehyde 3-phosphate + L-glutamine = pyridoxal 5'-phosphate + L-glutamate + phosphate + 3 H2O + H(+). The enzyme catalyses L-glutamine + H2O = L-glutamate + NH4(+). Its pathway is cofactor biosynthesis; pyridoxal 5'-phosphate biosynthesis. Its function is as follows. Catalyzes the hydrolysis of glutamine to glutamate and ammonia as part of the biosynthesis of pyridoxal 5'-phosphate. The resulting ammonia molecule is channeled to the active site of PdxS. The chain is Pyridoxal 5'-phosphate synthase subunit PdxT from Streptomyces avermitilis (strain ATCC 31267 / DSM 46492 / JCM 5070 / NBRC 14893 / NCIMB 12804 / NRRL 8165 / MA-4680).